A 543-amino-acid polypeptide reads, in one-letter code: UBP9-binding protein bun62 (543 aa).

The residue at position 43 (Ser43) is a Phosphoserine. WD repeat units follow at residues 239-279 (LNSS…QPLH), 320-361 (FSKS…DVFH), 362-401 (SYFA…LVAR), 404-448 (GHKS…IHRP), and 513-542 (VDDS…TWQR).

Interacts with ubp9 and bun107.

The protein localises to the nucleus. It localises to the cytoplasm. The protein resides in the cell tip. Required for the ubp9 recruitment to septa and cell tips but also for its enzymatic activity at these specific locations. This is UBP9-binding protein bun62 (bun62) from Schizosaccharomyces pombe (strain 972 / ATCC 24843) (Fission yeast).